Reading from the N-terminus, the 166-residue chain is Lithostathine-1-alpha (166 aa).

The first 22 residues, 1–22 (MAQTSSYFMLISCLMFLSQSQG), serve as a signal peptide directing secretion. The residue at position 23 (Gln23) is a Pyrrolidone carboxylic acid. Thr27 carries O-linked (GalNAc) threonine glycosylation. The 131-residue stretch at 34 to 164 (ISCPEGTNAY…EDKFSFVCKF (131 aa)) folds into the C-type lectin domain. 3 disulfides stabilise this stretch: Cys36/Cys47, Cys64/Cys162, and Cys137/Cys154.

Post-translationally, the composition of the O-linked carbohydrate on Thr-27 is complex and varied. In the crystallographic structure, the attached sugar appears to be N-acetylglucosamine, typical of an intracellular protein, rather than N-acetylgalactosamine. In pancreatic acinar cells and, in lower levels, in brain. Enhanced expression of PSP-related transcripts and intraneuronal accumulation of PSP-like proteins is found in brain from Alzheimer disease and Down syndrome patients.

Its subcellular location is the secreted. Functionally, might act as an inhibitor of spontaneous calcium carbonate precipitation. May be associated with neuronal sprouting in brain, and with brain and pancreas regeneration. The protein is Lithostathine-1-alpha (REG1A) of Homo sapiens (Human).